Here is a 263-residue protein sequence, read N- to C-terminus: uncharacterized protein (263 aa).

Residues 22 to 44 are disordered; the sequence is IDGSDDQSDRTRSSSGDSTSNSL. The span at 34 to 43 shows a compositional bias: low complexity; it reads SSSGDSTSNS.

It is found in the mitochondrion. This is an uncharacterized protein from Schizosaccharomyces pombe (strain 972 / ATCC 24843) (Fission yeast).